The chain runs to 533 residues: Flavin-containing monooxygenase 5 (533 aa).

Arg-5 bears the Dimethylated arginine mark. FAD-binding positions include 10–14, Glu-33, and 41–42; these read GAGAS and LW. A Phosphoserine modification is found at Ser-54. The residue at position 56 (Tyr-56) is a Phosphotyrosine. Phosphoserine is present on Ser-58. Position 62–63 (62–63) interacts with FAD; the sequence is NT. 196–199 contacts NADP(+); sequence SGGD. Ser-280 carries the post-translational modification Phosphoserine. Position 284 is a phosphothreonine (Thr-284). At Ser-401 the chain carries Phosphoserine. A helical membrane pass occupies residues 513-533; sequence MMTMGKFMLAIAFLAIAVVYF.

This sequence belongs to the FMO family. It depends on FAD as a cofactor. Kidney and liver.

The protein resides in the microsome membrane. Its subcellular location is the endoplasmic reticulum membrane. It carries out the reaction N,N-dimethylaniline + NADPH + O2 + H(+) = N,N-dimethylaniline N-oxide + NADP(+) + H2O. The enzyme catalyses NADPH + O2 + H(+) = H2O2 + NADP(+). It catalyses the reaction heptan-2-one + NADPH + O2 + H(+) = pentyl acetate + NADP(+) + H2O. The catalysed reaction is octan-3-one + NADPH + O2 + H(+) = pentyl propanoate + NADP(+) + H2O. It carries out the reaction octan-3-one + NADPH + O2 + H(+) = ethyl hexanoate + NADP(+) + H2O. The enzyme catalyses hexan-3-one + NADPH + O2 + H(+) = ethyl butanoate + NADP(+) + H2O. It catalyses the reaction hexan-3-one + NADPH + O2 + H(+) = propyl propanoate + NADP(+) + H2O. The catalysed reaction is heptan-4-one + NADPH + O2 + H(+) = propyl butanoate + NADP(+) + H2O. It carries out the reaction (2E)-geranial + NADPH + O2 + H(+) = (1E)-2,6-dimethylhepta-1,5-dien-1-yl formate + NADP(+) + H2O. The enzyme catalyses sulcatone + NADPH + O2 + H(+) = 4-methylpent-3-en-1-yl acetate + NADP(+) + H2O. Acts as a Baeyer-Villiger monooxygenase on a broad range of substrates. Catalyzes the insertion of an oxygen atom into a carbon-carbon bond adjacent to a carbonyl, which converts ketones to esters. Active on diverse carbonyl compounds, whereas soft nucleophiles are mostly non- or poorly reactive. In contrast with other forms of FMO it is non- or poorly active on 'classical' substrates such as drugs, pesticides, and dietary components containing soft nucleophilic heteroatoms. Able to oxidize drug molecules bearing a carbonyl group on an aliphatic chain, such as nabumetone and pentoxifylline. Also, in the absence of substrates, shows slow but yet significant NADPH oxidase activity. Acts as a positive modulator of cholesterol biosynthesis as well as glucose homeostasis, promoting metabolic aging via pleiotropic effects. The protein is Flavin-containing monooxygenase 5 (FMO5) of Oryctolagus cuniculus (Rabbit).